The sequence spans 137 residues: Ribosomal RNA small subunit methyltransferase G (137 aa).

S-adenosyl-L-methionine contacts are provided by residues Gly-75, Phe-80, and 126-127; that span reads AE.

It belongs to the methyltransferase superfamily. RNA methyltransferase RsmG family.

The protein resides in the cytoplasm. Functionally, specifically methylates the N7 position of a guanine in 16S rRNA. This Mycoplasma mycoides subsp. mycoides SC (strain CCUG 32753 / NCTC 10114 / PG1) protein is Ribosomal RNA small subunit methyltransferase G.